We begin with the raw amino-acid sequence, 73 residues long: Conotoxin Vc6.17 (73 aa).

The first 19 residues, 1–19, serve as a signal peptide directing secretion; that stretch reads MQKLIILLLVAAVLMSTQA. Positions 20 to 44 are excised as a propeptide; it reads LFQEKRRKEKIDLLSKRKTDAEKQH. 3 disulfide bridges follow: Cys48–Cys62, Cys55–Cys66, and Cys61–Cys71.

Belongs to the conotoxin O2 superfamily. Expressed by the venom duct.

It localises to the secreted. Inhibits voltage-gated ion channels. The protein is Conotoxin Vc6.17 of Conus victoriae (Queen Victoria cone).